Reading from the N-terminus, the 643-residue chain is Arginine--tRNA ligase, mitochondrial (643 aa).

Positions 188–198 (PNIAKPFHAGH) match the 'HIGH' region motif.

This sequence belongs to the class-I aminoacyl-tRNA synthetase family.

It localises to the mitochondrion matrix. The enzyme catalyses tRNA(Arg) + L-arginine + ATP = L-arginyl-tRNA(Arg) + AMP + diphosphate. The polypeptide is Arginine--tRNA ligase, mitochondrial (MSR1) (Saccharomyces cerevisiae (strain ATCC 204508 / S288c) (Baker's yeast)).